Reading from the N-terminus, the 685-residue chain is A-type ATP synthase subunit I (685 aa).

7 helical membrane-spanning segments follow: residues 172–192 (VGGLAAVEASGGSVVVAVAVP), 348–368 (EIVPTVFLAITLPLTFALMFP), 394–414 (VIAVMGGASVVSGLLAGEVFG), 464–484 (LFMGAFMLSFGTFLGVVNGVI), 538–558 (LVLAGSVLGLAWMLLAGPIIY), 604–624 (MFVIYYLTVMIMQGGILADVV), and 626–646 (ALLYVGGNLAVAAMEGLLAFA).

The protein belongs to the V-ATPase 116 kDa subunit family. In terms of assembly, has multiple subunits with at least A(3), B(3), C, D, E, F, H, I and proteolipid K(x).

It is found in the cell membrane. Its function is as follows. Component of the A-type ATP synthase that produces ATP from ADP in the presence of a proton gradient across the membrane. This is A-type ATP synthase subunit I from Aeropyrum pernix (strain ATCC 700893 / DSM 11879 / JCM 9820 / NBRC 100138 / K1).